A 265-amino-acid chain; its full sequence is MIKWPWKAQEITQNEDWPWDDALAIPLLVNLTAQEQARLIALAERFLQQKRLVALQGFELDSLKSARIALIFCLPILELGIEWLDGFHEVLIYPAPFVVDDEWEDDIGLVHSQRVVQSGQSWQQGPIILNWLDTQDSFDASGFNLIIHEVAHKLDMRNGDRASGIPFIPLRDVAGWEHDLHAAMNNIQDEIDLVGESAASIDAYAATDPAECFAVLSEYFFSAPELFAPRFPALWQRFCQFYRQDPSQRLRVSAAEGDYGEESEH.

Residues His-111, His-148, His-152, and Glu-211 each contribute to the Zn(2+) site.

This sequence belongs to the MtfA family. As to quaternary structure, interacts with Mlc. The cofactor is Zn(2+).

The protein resides in the cytoplasm. Functionally, involved in the modulation of the activity of the glucose-phosphotransferase system (glucose-PTS). Interacts with the transcriptional repressor Mlc, preventing its interaction with DNA and leading to the modulation of expression of genes regulated by Mlc, including ptsG, which encodes the PTS system glucose-specific EIICB component. In terms of biological role, shows zinc-dependent metallopeptidase activity. The sequence is that of Mlc titration factor A from Salmonella typhi.